Consider the following 477-residue polypeptide: Membrane-bound lytic murein transglycosylase F (477 aa).

Residues 1 to 22 (MTRFLLIIILGFLLTACQQVTV) form the signal peptide. Residues 23 to 257 (DEPEFVPHQL…HLNEKYFGHV (235 aa)) form a non-LT domain region. The segment at 258 to 477 (KRFDYIDTRA…AGSLSPDQPK (220 aa)) is LT domain. The active site involves E302. Residues 446–477 (SKQPMPEDEQNDLIAEELPSMPAGSLSPDQPK) are disordered. A compositionally biased stretch (acidic residues) spans 451–460 (PEDEQNDLIA).

It in the N-terminal section; belongs to the bacterial solute-binding protein 3 family. The protein in the C-terminal section; belongs to the transglycosylase Slt family.

The protein resides in the cell outer membrane. It catalyses the reaction Exolytic cleavage of the (1-&gt;4)-beta-glycosidic linkage between N-acetylmuramic acid (MurNAc) and N-acetylglucosamine (GlcNAc) residues in peptidoglycan, from either the reducing or the non-reducing ends of the peptidoglycan chains, with concomitant formation of a 1,6-anhydrobond in the MurNAc residue.. Functionally, murein-degrading enzyme that degrades murein glycan strands and insoluble, high-molecular weight murein sacculi, with the concomitant formation of a 1,6-anhydromuramoyl product. Lytic transglycosylases (LTs) play an integral role in the metabolism of the peptidoglycan (PG) sacculus. Their lytic action creates space within the PG sacculus to allow for its expansion as well as for the insertion of various structures such as secretion systems and flagella. The polypeptide is Membrane-bound lytic murein transglycosylase F (Shewanella sp. (strain W3-18-1)).